The primary structure comprises 152 residues: UPF0178 protein KPN78578_03210 (152 aa).

The protein belongs to the UPF0178 family.

This chain is UPF0178 protein KPN78578_03210, found in Klebsiella pneumoniae subsp. pneumoniae (strain ATCC 700721 / MGH 78578).